Reading from the N-terminus, the 753-residue chain is Polyribonucleotide nucleotidyltransferase (753 aa).

Residues D488 and D494 each coordinate Mg(2+). Residues 555–614 form the KH domain; the sequence is PRLLRTKISPDKIGALIGPGGKNIRGIQETTGAVIEVDDEGTVLVASSNKESAQEAMRQV. Positions 624–692 constitute an S1 motif domain; it reads GKIYDGTVSS…EHDRVKLSRR (69 aa). Acidic residues predominate over residues 698-719; sequence LGEEDPLAVEGEGGGDSEGGGD. A disordered region spans residues 698-753; that stretch reads LGEEDPLAVEGEGGGDSEGGGDGEDRPRRRRGGSGGGGGGGRGRGPRRSGGGRDRD. Positions 730–740 are enriched in gly residues; sequence GSGGGGGGGRG.

This sequence belongs to the polyribonucleotide nucleotidyltransferase family. The cofactor is Mg(2+).

The protein resides in the cytoplasm. It carries out the reaction RNA(n+1) + phosphate = RNA(n) + a ribonucleoside 5'-diphosphate. Functionally, involved in mRNA degradation. Catalyzes the phosphorolysis of single-stranded polyribonucleotides processively in the 3'- to 5'-direction. The sequence is that of Polyribonucleotide nucleotidyltransferase from Rhodopirellula baltica (strain DSM 10527 / NCIMB 13988 / SH1).